A 142-amino-acid polypeptide reads, in one-letter code: Hemoglobin subunit alpha (142 aa).

The 141-residue stretch at 2–142 folds into the Globin domain; sequence VLSPADKSNV…VSTVLTSKYR (141 aa). At Ser4 the chain carries Phosphoserine. An N6-succinyllysine mark is found at Lys8 and Lys12. Lys17 carries the N6-acetyllysine; alternate modification. The residue at position 17 (Lys17) is an N6-succinyllysine; alternate. Tyr25 carries the post-translational modification Phosphotyrosine. Residue Ser36 is modified to Phosphoserine. Lys41 is subject to N6-succinyllysine. Ser50 is modified (phosphoserine). Residue His59 participates in O2 binding. Position 88 (His88) interacts with heme b. At Ser103 the chain carries Phosphoserine. The residue at position 109 (Thr109) is a Phosphothreonine. Residues Ser125 and Ser132 each carry the phosphoserine modification. Thr135 and Thr138 each carry phosphothreonine. Ser139 bears the Phosphoserine mark.

It belongs to the globin family. In terms of assembly, heterotetramer of two alpha chains and two beta chains. As to expression, red blood cells.

Functionally, involved in oxygen transport from the lung to the various peripheral tissues. Its function is as follows. Hemopressin acts as an antagonist peptide of the cannabinoid receptor CNR1. Hemopressin-binding efficiently blocks cannabinoid receptor CNR1 and subsequent signaling. The sequence is that of Hemoglobin subunit alpha (HBA) from Macaca fuscata fuscata (Japanese macaque).